The following is a 234-amino-acid chain: Sugar fermentation stimulation protein homolog (234 aa).

The protein belongs to the SfsA family.

This Citrobacter koseri (strain ATCC BAA-895 / CDC 4225-83 / SGSC4696) protein is Sugar fermentation stimulation protein homolog.